The chain runs to 1001 residues: Copper-transporting ATPase RAN1 (1001 aa).

The tract at residues 1-21 (MAPSRRDLQLTPVTGGSSSQI) is disordered. Topologically, residues 1-298 (MAPSRRDLQL…TGEASNMFRR (298 aa)) are cytoplasmic. Residues 11-21 (TPVTGGSSSQI) show a composition bias toward polar residues. 2 consecutive HMA domains span residues 56–122 (RKIQ…FEAE) and 133–199 (LVGQ…FEGS). Cu(+)-binding residues include Cys67, Cys70, Cys144, and Cys147. The 67-residue stretch at 207 to 273 (DKLVLRVDGI…GIEEDGFGKF (67 aa)) folds into the HMA 3; degenerate domain. A helical membrane pass occupies residues 299–320 (FISSLVLSIPLFFIQVICPHIA). The Extracellular segment spans residues 321-338 (LFDALLVWRCGPFMMGDW). Residues 339 to 358 (LKWALVSVIQFVIGKRFYVA) traverse the membrane as a helical segment. The Cytoplasmic portion of the chain corresponds to 359-365 (AWRALRN). A helical membrane pass occupies residues 366-386 (GSTNMDVLVALGTSASYFYSV). Residues 387–403 (GALLYGAVTGFWSPTYF) lie on the Extracellular side of the membrane. Residues 404–424 (DASAMLITFVLLGKYLESLAK) traverse the membrane as a helical segment. Over 425–558 (GKTSDAMKKL…KAPIQKFADY (134 aa)) the chain is Cytoplasmic. A helical membrane pass occupies residues 559-581 (VASIFVPVVITLALFTLVGWSIG). Topologically, residues 582–602 (GAVGAYPDEWLPENGTHFVFS) are extracellular. A helical transmembrane segment spans residues 603–620 (LMFSISVVVIACPCALGL). Over 621 to 931 (ATPTAVMVAT…DLSRKTLTRI (311 aa)) the chain is Cytoplasmic. Asp658 (4-aspartylphosphate intermediate) is an active-site residue. Residues Asp877 and Asp881 each coordinate Mg(2+). A helical membrane pass occupies residues 932–951 (RLNYVFAMAYNVVSIPIAAG). At 952-963 (VFFPVLRVQLPP) the chain is on the extracellular side. A helical membrane pass occupies residues 964–982 (WAAGACMALSSVSVVCSSL). Residues 983–1001 (LLRRYKKPRLTTVLKITTE) are Cytoplasmic-facing.

It belongs to the cation transport ATPase (P-type) (TC 3.A.3) family. Type IB subfamily.

The protein localises to the membrane. The enzyme catalyses Cu(+)(in) + ATP + H2O = Cu(+)(out) + ADP + phosphate + H(+). In terms of biological role, involved in copper import into the cell. Essential for ethylene signaling, which requires copper. Acts by delivering copper to create functional hormone receptors. The protein is Copper-transporting ATPase RAN1 (RAN1) of Arabidopsis thaliana (Mouse-ear cress).